Consider the following 323-residue polypeptide: tRNA U34 carboxymethyltransferase (323 aa).

Residues Lys91, Trp105, Lys110, Gly130, 152-154 (DPT), 181-182 (IE), Met196, Tyr200, and Arg315 contribute to the carboxy-S-adenosyl-L-methionine site.

It belongs to the class I-like SAM-binding methyltransferase superfamily. CmoB family. In terms of assembly, homotetramer.

The enzyme catalyses carboxy-S-adenosyl-L-methionine + 5-hydroxyuridine(34) in tRNA = 5-carboxymethoxyuridine(34) in tRNA + S-adenosyl-L-homocysteine + H(+). In terms of biological role, catalyzes carboxymethyl transfer from carboxy-S-adenosyl-L-methionine (Cx-SAM) to 5-hydroxyuridine (ho5U) to form 5-carboxymethoxyuridine (cmo5U) at position 34 in tRNAs. The chain is tRNA U34 carboxymethyltransferase from Escherichia coli O6:H1 (strain CFT073 / ATCC 700928 / UPEC).